Here is a 395-residue protein sequence, read N- to C-terminus: Scyllo-inosose 3-dehydrogenase (395 aa).

Cysteine 66 is a Zn(2+) binding site. Catalysis depends on charge relay system residues serine 68 and histidine 71. Zn(2+) is bound by residues histidine 95, glutamate 96, cysteine 131, cysteine 134, cysteine 137, cysteine 145, and glutamate 193. NAD(+) is bound by residues isoleucine 223, glutamate 243, and arginine 248.

This sequence belongs to the zinc-containing alcohol dehydrogenase family. Homodimer. Zn(2+) is required as a cofactor.

It catalyses the reaction scyllo-inosose + NAD(+) = 3-dehydro-scyllo-inosose + NADH + H(+). Its pathway is polyol metabolism; myo-inositol metabolism. Catalyzes the NAD(+)-dependent oxidation of scyllo-inosose (2-keto-myo-inositol) to 3-dehydro-scyllo-inosose (diketo-inositol), and thus probably functions in a myo-inositol degradation pathway together with IolG, IolN and IolO. Has no activity on myo-inositol, D-chiro-inositol and 1-keto-D-chiro-inositol. This is Scyllo-inosose 3-dehydrogenase from Thermotoga maritima (strain ATCC 43589 / DSM 3109 / JCM 10099 / NBRC 100826 / MSB8).